Reading from the N-terminus, the 1104-residue chain is Reverse gyrase (1104 aa).

The RG N-terminal-type zinc-finger motif lies at 1–39 (MAVNSKYHHSCINCGGLNTDERNERGLPCEVCLPEDSPS). Residues cysteine 11, cysteine 14, cysteine 29, and cysteine 32 each coordinate Zn(2+). ADP is bound by residues phenylalanine 75, aspartate 78, glutamine 83, glycine 103, glycine 105, lysine 106, threonine 107, and threonine 108. ATP is bound by residues glutamine 83 and 100 to 107 (APTGVGKT). The Helicase ATP-binding domain maps to 87–242 (AKRIVQGKSF…FSTIKQGKIY (156 aa)). Positions 203 to 206 (DDVD) match the DEAD box motif. An insert region region spans residues 223 to 250 (GIPEEIIRKAFSTIKQGKIYERPKNLKP). Residues 300 to 522 (KLVELLEIFR…EAEANWKELV (223 aa)) enclose the Helicase C-terminal domain. The tract at residues 390 to 460 (RFSLELDKAP…KDEDLELIIP (71 aa)) is latch region. The topoisomerase I stretch occupies residues 538–1104 (DTSRSLLIIV…EEIKSLMEEG (567 aa)). Residues 542-699 (SLLIIVESPT…SLRRIEMHEI (158 aa)) enclose the Toprim domain. Glutamate 548 contacts Mg(2+). An RG C-terminal-type zinc finger spans residues 618 to 645 (LKRCRDCGYQFTEDRDECPVCSSKNIDD). Cysteine 621, cysteine 624, cysteine 635, and cysteine 638 together coordinate Zn(2+). A Mg(2+)-binding site is contributed by aspartate 668. The region spanning 715-1101 (DFNLVKAQIV…LLYEEIKSLM (387 aa)) is the Topo IA-type catalytic domain. The active-site O-(5'-phospho-DNA)-tyrosine intermediate is the tyrosine 851.

In the N-terminal section; belongs to the DEAD box helicase family. DDVD subfamily. It in the C-terminal section; belongs to the type IA topoisomerase family. As to quaternary structure, monomer. It depends on Zn(2+) as a cofactor. Mg(2+) serves as cofactor.

It is found in the cytoplasm. The enzyme catalyses ATP + H2O = ADP + phosphate + H(+). Functionally, modifies the topological state of DNA by introducing positive supercoils in an ATP-dependent process. Increases the linking number in steps of +1. Probably recognizes regions with a low GC content which melt and form a ssDNA bubble, allowing the enzyme to bind and cleave the DNA prior to strand passage; the bubble is probably cleaved by 2 reverse gyrase molecules, one on each strand. Positively supercoils DNA with all NTPS, although it strongly prefers ATP. In the presence of non-hydrolyzable ATP analogs it partially relaxes negative supercoils. Has an intrinsic ATPase activity that is stimulated by DNA; ssDNA is most effective. Binds to single-stranded DNA, transiently cleaves and then rejoins the ends, introducing a positive supercoil in the process. The scissile phosphodiester is attacked by the catalytic tyrosine of the enzyme, resulting in the formation of a DNA-(5'-phosphotyrosyl)-enzyme intermediate. The helicase-like domain is a nucleotide-dependent switch that alternates between a physically closed ATP-bound state with a slight preference for dsDNA, and an open ADP-bound state with a high preference for ssDNA. Whole enzyme has a very poor (k-unwind=0.001 sec(-1)) non-processive helicase activity in the 3'-5' direction that works on short substrates, while the isolated helicase domain has a slightly better helicase activity that works in both directions. Probably involved in rewinding DNA strands in regions of the chromosome that have opened up to allow replication, transcription, DNA repair and/or for DNA protection. This Thermotoga maritima (strain ATCC 43589 / DSM 3109 / JCM 10099 / NBRC 100826 / MSB8) protein is Reverse gyrase.